Reading from the N-terminus, the 533-residue chain is NAD(P)H-quinone oxidoreductase chain 4 2 (533 aa).

The next 14 helical transmembrane spans lie at 5–25 (FPWL…IPVL), 33–53 (VRWY…MVFW), 86–106 (LAVP…FAAW), 114–134 (LFYF…AAQD), 135–155 (LILF…LISI), 168–188 (FILY…GMAF), 208–228 (ALEL…LPIF), 242–262 (SAPV…YGLI), 276–296 (FAPV…LTAF), 310–330 (ISHM…GLNG), 331–351 (AMLQ…LAGV), 384–404 (ASLA…FLGL), 416–436 (VGVI…LLSM), and 462–482 (TFIA…PKVA).

The protein belongs to the complex I subunit 4 family.

It localises to the cellular thylakoid membrane. The enzyme catalyses a plastoquinone + NADH + (n+1) H(+)(in) = a plastoquinol + NAD(+) + n H(+)(out). It carries out the reaction a plastoquinone + NADPH + (n+1) H(+)(in) = a plastoquinol + NADP(+) + n H(+)(out). Functionally, NDH-1 shuttles electrons from NAD(P)H, via FMN and iron-sulfur (Fe-S) centers, to quinones in the respiratory chain. The immediate electron acceptor for the enzyme in this species is believed to be plastoquinone. Couples the redox reaction to proton translocation (for every two electrons transferred, four hydrogen ions are translocated across the cytoplasmic membrane), and thus conserves the redox energy in a proton gradient. The protein is NAD(P)H-quinone oxidoreductase chain 4 2 of Thermosynechococcus vestitus (strain NIES-2133 / IAM M-273 / BP-1).